An 81-amino-acid chain; its full sequence is Gamma-conotoxin-like TxMEKL-0511 (81 aa).

A signal peptide spans 1 to 19; that stretch reads MEKLTILLLVAAVLLSIQA. A propeptide spanning residues 20-45 is cleaved from the precursor; it reads LNQEKHQRAKINLLSKRKPPAERWWR. 3 cysteine pairs are disulfide-bonded: C49–C63, C56–C67, and C62–C72.

The protein belongs to the conotoxin O2 superfamily. As to expression, expressed by the venom duct.

Its subcellular location is the secreted. Functionally, gamma-conotoxins may act on voltage-gated non-specific cation pacemaker channels (HCN). This is Gamma-conotoxin-like TxMEKL-0511 from Conus textile (Cloth-of-gold cone).